Consider the following 47-residue polypeptide: Trifunctional NAD biosynthesis/regulator protein NadR (47 aa).

Residues 7 to 47 (LKSAIKQKGCTLDEVAEPSGMTKGYLSQLLNRKIKARARRS) enclose the HTH cro/C1-type domain. Residues 18-37 (LDEVAEPSGMTKGYLSQLLN) constitute a DNA-binding region (H-T-H motif).

It is found in the cell membrane. Its subcellular location is the cytoplasm. It carries out the reaction beta-nicotinamide D-ribonucleotide + ATP + H(+) = diphosphate + NAD(+). It catalyses the reaction beta-nicotinamide D-riboside + ATP = beta-nicotinamide D-ribonucleotide + ADP + H(+). It participates in cofactor biosynthesis; NAD(+) biosynthesis [regulation]. It functions in the pathway cofactor biosynthesis; NAD(+) biosynthesis; NAD(+) from nicotinamide D-ribonucleotide: step 1/1. In terms of biological role, this enzyme has three activities: DNA binding, nicotinamide mononucleotide (NMN) adenylyltransferase and ribosylnicotinamide (RN) kinase. The DNA-binding domain binds to the nadB operator sequence in an NAD- and ATP-dependent manner. As NAD levels increase within the cell, the affinity of NadR for the nadB operator regions of nadA, nadB, and pncB increases, repressing the transcription of these genes. The RN kinase activity catalyzes the phosphorylation of RN to form nicotinamide ribonucleotide. The NMN adenylyltransferase activity catalyzes the transfer of the AMP moiety of ATP to nicotinamide ribonucleotide to form NAD(+). The NMN adenylyltransferase domain also functions as the NAD and ATP sensor. The polypeptide is Trifunctional NAD biosynthesis/regulator protein NadR (nadR) (Klebsiella pneumoniae).